The chain runs to 168 residues: Phosphopantetheine adenylyltransferase (168 aa).

Substrate is bound at residue serine 8. Residues 8–9 (SF) and histidine 16 each bind ATP. Residues lysine 40, threonine 72, and arginine 86 each coordinate substrate. ATP-binding positions include 87–89 (GLR), glutamate 97, and 122–128 (YSFLSSS).

This sequence belongs to the bacterial CoaD family. In terms of assembly, homohexamer. Requires Mg(2+) as cofactor.

The protein localises to the cytoplasm. The enzyme catalyses (R)-4'-phosphopantetheine + ATP + H(+) = 3'-dephospho-CoA + diphosphate. It participates in cofactor biosynthesis; coenzyme A biosynthesis; CoA from (R)-pantothenate: step 4/5. Reversibly transfers an adenylyl group from ATP to 4'-phosphopantetheine, yielding dephospho-CoA (dPCoA) and pyrophosphate. This chain is Phosphopantetheine adenylyltransferase, found in Thermosynechococcus vestitus (strain NIES-2133 / IAM M-273 / BP-1).